The sequence spans 319 residues: Histidinol-phosphate aminotransferase 1 (319 aa).

Lys182 is subject to N6-(pyridoxal phosphate)lysine.

Belongs to the class-II pyridoxal-phosphate-dependent aminotransferase family. Histidinol-phosphate aminotransferase subfamily. Requires pyridoxal 5'-phosphate as cofactor.

The catalysed reaction is L-histidinol phosphate + 2-oxoglutarate = 3-(imidazol-4-yl)-2-oxopropyl phosphate + L-glutamate. It functions in the pathway amino-acid biosynthesis; L-histidine biosynthesis; L-histidine from 5-phospho-alpha-D-ribose 1-diphosphate: step 7/9. The polypeptide is Histidinol-phosphate aminotransferase 1 (hisC1) (Archaeoglobus fulgidus (strain ATCC 49558 / DSM 4304 / JCM 9628 / NBRC 100126 / VC-16)).